The chain runs to 165 residues: Large ribosomal subunit protein uL15 (165 aa).

Residues 1–44 (MSLNQLKAPRGANRAKKRVGRGQGSGLGKTAGRGGKGQKARSGN) form a disordered region. The span at 21 to 37 (RGQGSGLGKTAGRGGKG) shows a compositional bias: gly residues.

Belongs to the universal ribosomal protein uL15 family. Part of the 50S ribosomal subunit.

Binds to the 23S rRNA. The sequence is that of Large ribosomal subunit protein uL15 from Anaeromyxobacter dehalogenans (strain 2CP-C).